The primary structure comprises 434 residues: Sulfide-quinone reductase (434 aa).

FAD-binding positions include 8 to 12, 34 to 35, and 77 to 78; these read GAGTG and SA. Cys160 serves as the catalytic Cysteine persulfide intermediate. Ile302 and Gly322 together coordinate FAD. Residue Cys356 is the Cysteine persulfide intermediate of the active site. Lys391 contributes to the FAD binding site.

This sequence belongs to the SQRD family. Homodimer. It depends on FAD as a cofactor.

The protein resides in the membrane. It carries out the reaction n a quinone + n hydrogen sulfide + n H(+) = polysulfur(n-2) + n a quinol. In terms of biological role, catalyzes the oxidation of hydrogen sulfide, with the help of a quinone. Consecutive reaction cycles lead to the accumulation of a polysulfide product on the active site Cys residues; these products are released when they exceed a critical length, typically as cyclooctasulfur. The sequence is that of Sulfide-quinone reductase from Acidithiobacillus ferrooxidans (strain ATCC 23270 / DSM 14882 / CIP 104768 / NCIMB 8455) (Ferrobacillus ferrooxidans (strain ATCC 23270)).